The sequence spans 876 residues: Valine--tRNA ligase (876 aa).

Residues 43-53 carry the 'HIGH' region motif; it reads PNVTGVLHMGH. The short motif at 534–538 is the 'KMSKS' region element; sequence KMSKS. Residue lysine 537 participates in ATP binding. Residues 847–876 are a coiled coil; it reads PEKVVAIEKAKKADAEAKIEALKASLKSLS.

Belongs to the class-I aminoacyl-tRNA synthetase family. ValS type 1 subfamily. In terms of assembly, monomer.

It is found in the cytoplasm. It carries out the reaction tRNA(Val) + L-valine + ATP = L-valyl-tRNA(Val) + AMP + diphosphate. Its function is as follows. Catalyzes the attachment of valine to tRNA(Val). As ValRS can inadvertently accommodate and process structurally similar amino acids such as threonine, to avoid such errors, it has a 'posttransfer' editing activity that hydrolyzes mischarged Thr-tRNA(Val) in a tRNA-dependent manner. This chain is Valine--tRNA ligase, found in Christiangramia forsetii (strain DSM 17595 / CGMCC 1.15422 / KT0803) (Gramella forsetii).